The following is a 253-amino-acid chain: Adenylate kinase (253 aa).

15–20 (GSGKGT) contacts ATP. Residues 35–64 (SSGDLLRNAVSQNTPLGQEIKSYLDQGKLL) form an NMP region. AMP-binding positions include serine 36, arginine 41, 62-64 (KLL), 103-106 (GFPR), and glutamine 110. An LID region spans residues 143-176 (SRYICPSCQGIYNKQQGFSRCPKCLVELTRRSDD). ATP is bound at residue arginine 144. Zn(2+)-binding residues include cysteine 147 and cysteine 150. Residue 153 to 154 (IY) coordinates ATP. Zn(2+) contacts are provided by cysteine 163 and cysteine 166. AMP is bound by residues arginine 173 and arginine 184. An ATP-binding site is contributed by alanine 212.

This sequence belongs to the adenylate kinase family. Monomer.

It is found in the cytoplasm. It carries out the reaction AMP + ATP = 2 ADP. The protein operates within purine metabolism; AMP biosynthesis via salvage pathway; AMP from ADP: step 1/1. In terms of biological role, catalyzes the reversible transfer of the terminal phosphate group between ATP and AMP. Plays an important role in cellular energy homeostasis and in adenine nucleotide metabolism. The protein is Adenylate kinase of Chlamydia muridarum (strain MoPn / Nigg).